The primary structure comprises 186 residues: Ribosome-recycling factor (186 aa).

The protein belongs to the RRF family.

It localises to the cytoplasm. Functionally, responsible for the release of ribosomes from messenger RNA at the termination of protein biosynthesis. May increase the efficiency of translation by recycling ribosomes from one round of translation to another. This is Ribosome-recycling factor from Burkholderia ambifaria (strain ATCC BAA-244 / DSM 16087 / CCUG 44356 / LMG 19182 / AMMD) (Burkholderia cepacia (strain AMMD)).